The primary structure comprises 122 residues: Large ribosomal subunit protein uL14 (122 aa).

This sequence belongs to the universal ribosomal protein uL14 family. As to quaternary structure, part of the 50S ribosomal subunit. Forms a cluster with proteins L3 and L19. In the 70S ribosome, L14 and L19 interact and together make contacts with the 16S rRNA in bridges B5 and B8.

Binds to 23S rRNA. Forms part of two intersubunit bridges in the 70S ribosome. The protein is Large ribosomal subunit protein uL14 of Lactobacillus delbrueckii subsp. bulgaricus (strain ATCC BAA-365 / Lb-18).